Consider the following 277-residue polypeptide: Phosphate import ATP-binding protein PstB 2 (277 aa).

Positions 31–272 (IEVPGLSLFY…PAKKQTEDYI (242 aa)) constitute an ABC transporter domain. 63–70 (GPSGCGKS) serves as a coordination point for ATP.

The protein belongs to the ABC transporter superfamily. Phosphate importer (TC 3.A.1.7) family. In terms of assembly, the complex is composed of two ATP-binding proteins (PstB), two transmembrane proteins (PstC and PstA) and a solute-binding protein (PstS).

The protein localises to the cell inner membrane. The enzyme catalyses phosphate(out) + ATP + H2O = ADP + 2 phosphate(in) + H(+). Part of the ABC transporter complex PstSACB involved in phosphate import. Responsible for energy coupling to the transport system. The polypeptide is Phosphate import ATP-binding protein PstB 2 (Pseudomonas putida (strain ATCC 47054 / DSM 6125 / CFBP 8728 / NCIMB 11950 / KT2440)).